Consider the following 132-residue polypeptide: Small ribosomal subunit protein uS8 (132 aa).

This sequence belongs to the universal ribosomal protein uS8 family. In terms of assembly, part of the 30S ribosomal subunit. Contacts proteins S5 and S12.

In terms of biological role, one of the primary rRNA binding proteins, it binds directly to 16S rRNA central domain where it helps coordinate assembly of the platform of the 30S subunit. The sequence is that of Small ribosomal subunit protein uS8 from Cereibacter sphaeroides (strain ATCC 17029 / ATH 2.4.9) (Rhodobacter sphaeroides).